The primary structure comprises 268 residues: Chymotrypsin-C (268 aa).

The first 16 residues, 1 to 16 (MLGITVLAAILACASC), serve as a signal peptide directing secretion. A propeptide spans 17–29 (CGNPAFPPNLSTR) (activation peptide). Disulfide bonds link cysteine 17–cysteine 141, cysteine 59–cysteine 75, cysteine 155–cysteine 222, cysteine 186–cysteine 202, and cysteine 212–cysteine 243. Asparagine 25 carries an N-linked (GlcNAc...) asparagine glycan. A Peptidase S1 domain is found at 30–267 (VVGGEDAVPN…YNDWINEKIQ (238 aa)). The Charge relay system role is filled by histidine 74. A glycan (N-linked (GlcNAc...) asparagine) is linked at asparagine 90. Aspartate 121 serves as the catalytic Charge relay system. Serine 216 acts as the Charge relay system in catalysis.

The protein belongs to the peptidase S1 family. Elastase subfamily. Pancreas.

It carries out the reaction Preferential cleavage: Leu-|-Xaa, Tyr-|-Xaa, Phe-|-Xaa, Met-|-Xaa, Trp-|-Xaa, Gln-|-Xaa, Asn-|-Xaa.. Its function is as follows. Regulates activation and degradation of trypsinogens and procarboxypeptidases by targeting specific cleavage sites within their zymogen precursors. Has chymotrypsin-type protease activity and hypocalcemic activity. Cleaves TRY4 and TRY5 and thereby inhibits their autoactivation. The polypeptide is Chymotrypsin-C (Ctrc) (Rattus norvegicus (Rat)).